We begin with the raw amino-acid sequence, 1042 residues long: MADDSNSAYPRVDYGAGTGAAFPDLERRVLEAWAADDTFRASIENRSGAAEFVFYDGPPFANGLPHYGHLLTGYVKDVIPRFQTMRGKRVDRRFGWDCHGLPAEIEAEKQLGITDKSQIDAMGLAEFNAACKSSVLRYTGEWRDYVTRQARWVDFDNDYKTLDLDFMESVMWAFKSLYDKGLIYQGFRVLPYSWYEQTPLSNQETRLDDAYKMRQDPAVTVDMVLSVPGEHPLRELDGANALIWTTTPWTLPSNLAIAVHPDVRYVHLRAADGTRYVLAAERVSHYSREFGEDATVLAEFEGAALVGLSYRPPFDFFLGHPNAHRVLAADYVTTDSGTGVVHMAPAFGEEDMEVCSANDIELVQPLDPGGRFTSMVPPYEGLMVFDANPVIIKDLKAAGKLLRHETIEHSYPHSWRSGQPLIYMAVPSWFVAVTKFRDRMVELNKQITWVPEHIRDGQFGKWLEGARDWNISRNRYWGSPIPVWVSDDPAYPRVDVYGSLEELERDFGVRPTDLHRPAIDQLTRPNPDDPTGRSMMRRVPEVLDCWFESGSMPYAQVHYPFENKEWFDSHFPGDFIVEYNGQTRGWFYTLHVLATALFDSPAFKTVAAHGIVLGDDGLKMSKSKGNYPDVNEVFDRDGSDAMRWFLMSSPILRGGNLIVTERGIREGVSHALRPLWNAWTFLQLYASKPGEWRTDSTHVLDRYILAKLAQTRDGMTEALEVYDIAGACEELRTFADALTNWYVRRSRSRFWSEDRDAVDTLHTVLEVATRLAAPLLPLISEVIWRGLTGGRSVHLADWPAAADLPADPELVSTMDEVRTVCSTVLSLRKAKNLRVRLPLAEVTIAAPDAERLAPYADIVADEVNVKKVDLTTDVAVHGRFELAVNARAAGPRLGKDVQRVIKAVKAGDWTESADGVVSAAGITLLPEEYTQRLVAAEPESTAALPGNAGLVVLDSVVTEELEAEGWARDLVRELQETRKSLGLDVSDRIHVVLEVPEARRSWAQTHRDLIAGEILATSLEFGTAGEPAAELAGGVRASVRKA.

The 'HIGH' region signature appears at 59–69 (PFANGLPHYGH). The short motif at 619–623 (KMSKS) is the 'KMSKS' region element. ATP is bound at residue K622.

The protein belongs to the class-I aminoacyl-tRNA synthetase family. IleS type 2 subfamily. As to quaternary structure, monomer. It depends on Zn(2+) as a cofactor.

It localises to the cytoplasm. It catalyses the reaction tRNA(Ile) + L-isoleucine + ATP = L-isoleucyl-tRNA(Ile) + AMP + diphosphate. Its function is as follows. Catalyzes the attachment of isoleucine to tRNA(Ile). As IleRS can inadvertently accommodate and process structurally similar amino acids such as valine, to avoid such errors it has two additional distinct tRNA(Ile)-dependent editing activities. One activity is designated as 'pretransfer' editing and involves the hydrolysis of activated Val-AMP. The other activity is designated 'posttransfer' editing and involves deacylation of mischarged Val-tRNA(Ile). The polypeptide is Isoleucine--tRNA ligase (Nocardia farcinica (strain IFM 10152)).